A 341-amino-acid chain; its full sequence is Dye-decolorizing peroxidase (341 aa).

The Proton acceptor role is filled by D148. H221 provides a ligand contact to heme. The interval 304–341 is targeting peptide; sequence FLDDPPDAPTRLVPEATFTAPISDGSLGIGSLKRSAQQ.

Belongs to the DyP-type peroxidase family. In terms of assembly, homohexamer. Requires heme b as cofactor.

It localises to the encapsulin nanocompartment. Functionally, cargo protein of a type 1 encapsulin nanocompartment. Has both general peroxidase activity and dye-decolorizing activity. Can catalyze the oxidation of both protoporphyrinogen IX and coproporphyrinogen III to their corresponding porphyrins. Also efficiently decolorizes the dyes alizarin red and Cibacron blue F3GA. This cargo-loaded encapsulin nanocompartment is probably involved in protection against oxidative damage. The protein is Dye-decolorizing peroxidase of Rhodococcus erythropolis (strain PR4 / NBRC 100887).